The primary structure comprises 384 residues: Lipoprotein LprN (384 aa).

Residues 1–20 (MNRIWLRAIILTASSALLAG) form the signal peptide. Cysteine 21 carries the N-palmitoyl cysteine lipid modification. The S-diacylglycerol cysteine moiety is linked to residue cysteine 21.

Post-translationally, lipidated upon expression in E.coli.

The protein localises to the cell membrane. In terms of biological role, stimulates the host (mouse) immune response; lipidated protein produced in E.coli stimulates T-cell proliferation in mice previously sensitized with LprN. Spleenocytes from these mice produce increased amounts of TNF-alpha and IFN-gamma, as well as somewhat increased nitric oxide levels, upon subsequent challenge with LprN. Previously sensitized mice infected with M.tuberculosis have an exacerbated disease response, suggesting this lipoprotein may down-regulate the host's immune response. The sequence is that of Lipoprotein LprN (lprN) from Mycobacterium tuberculosis (strain ATCC 25618 / H37Rv).